A 634-amino-acid chain; its full sequence is Sodium-dependent neutral amino acid transporter B(0)AT1 (634 aa).

The Cytoplasmic segment spans residues M1–Y41. Residue S17 is modified to Phosphoserine. A helical membrane pass occupies residues M42–C62. At Q63–G67 the chain is on the extracellular side. The helical transmembrane segment at G68 to L88 threads the bilayer. The Cytoplasmic portion of the chain corresponds to E89–M119. A helical membrane pass occupies residues F120–F140. At F141–S192 the chain is on the extracellular side. N-linked (GlcNAc...) asparagine glycans are attached at residues N158 and N182. A helical transmembrane segment spans residues I193–I213. Over R214–K221 the chain is Cytoplasmic. The chain crosses the membrane as a helical span at residues A222 to L242. The Extracellular portion of the chain corresponds to T243 to W268. N258 carries an N-linked (GlcNAc...) asparagine glycan. The helical transmembrane segment at L269–F289 threads the bilayer. Over S290–V304 the chain is Cytoplasmic. A helical transmembrane segment spans residues I305–I325. Topologically, residues G326 to S413 are extracellular. N-linked (GlcNAc...) asparagine glycans are attached at residues N354 and N368. Residues P414–G434 traverse the membrane as a helical segment. Over N435–E456 the chain is Cytoplasmic. A helical membrane pass occupies residues L457–S477. Residues G478–S487 lie on the Extracellular side of the membrane. The chain crosses the membrane as a helical span at residues F488–V508. Residues Y509 to Q531 are Cytoplasmic-facing. The chain crosses the membrane as a helical span at residues V532–I552. Over E553–W581 the chain is Extracellular. A glycan (N-linked (GlcNAc...) asparagine) is linked at N555. The helical transmembrane segment at V582–I602 threads the bilayer. Over Y603 to N634 the chain is Cytoplasmic. S627 bears the Phosphoserine mark.

This sequence belongs to the sodium:neurotransmitter symporter (SNF) (TC 2.A.22) family. SLC6A19 subfamily. As to quaternary structure, interacts in a tissue-specific manner with ACE2 in small intestine and with CLTRN in the kidney. Interacts with CLTRN; this interaction is required for trafficking of SLC6A19 to the plasma membrane and for its catalytic activation in kidneys. Interacts with ACE2; this interaction is required for trafficking of SLC6A19 to the plasma membrane and for its catalytic activation in intestine. Interacts with ANPEP; the interaction positively regulates its amino acid transporter activity. In terms of tissue distribution, predominantly expressed in kidney and small intestine (at protein level). Expressed in the intestinal brush border (at protein level). Expression not observed in other organs, such as lung, skeletal muscle, brain, liver and pancreas. In kidney, expression is localized in the renal cortex but not in the medulla. Substantial amounts of expression in the proximal tubules. The distal nephron segments and the glomeruli are consistently negative. In the small intestine, expression is exclusively localized in villus enterocytes. High resolution of the hybridization-positive villi reveals a gradient of expression with the highest levels in apical cells. Not detected in crypt cells or in any other cell types of the small intestine.

Its subcellular location is the cell membrane. The enzyme catalyses L-alanine(in) + Na(+)(in) = L-alanine(out) + Na(+)(out). It carries out the reaction L-cysteine(in) + Na(+)(in) = L-cysteine(out) + Na(+)(out). The catalysed reaction is L-glutamine(in) + Na(+)(in) = L-glutamine(out) + Na(+)(out). It catalyses the reaction glycine(in) + Na(+)(in) = glycine(out) + Na(+)(out). The enzyme catalyses L-isoleucine(in) + Na(+)(in) = L-isoleucine(out) + Na(+)(out). It carries out the reaction L-leucine(in) + Na(+)(in) = L-leucine(out) + Na(+)(out). The catalysed reaction is L-methionine(in) + Na(+)(in) = L-methionine(out) + Na(+)(out). It catalyses the reaction L-phenylalanine(in) + Na(+)(in) = L-phenylalanine(out) + Na(+)(out). The enzyme catalyses L-serine(in) + Na(+)(in) = L-serine(out) + Na(+)(out). It carries out the reaction L-tryptophan(in) + Na(+)(in) = L-tryptophan(out) + Na(+)(out). The catalysed reaction is L-tyrosine(in) + Na(+)(in) = L-tyrosine(out) + Na(+)(out). It catalyses the reaction L-valine(in) + Na(+)(in) = L-valine(out) + Na(+)(out). Functionally, transporter that mediates resorption of neutral amino acids across the apical membrane of renal and intestinal epithelial cells. This uptake is sodium-dependent and chloride-independent. Requires CLTRN in kidney or ACE2 in intestine for cell surface expression and amino acid transporter activity. This is Sodium-dependent neutral amino acid transporter B(0)AT1 (Slc6a19) from Mus musculus (Mouse).